Reading from the N-terminus, the 319-residue chain is Putative protein phosphatase 2C 23 (319 aa).

The region spanning 73–314 is the PPM-type phosphatase domain; the sequence is AVRMESASCY…DDITVVVACI (242 aa). 3 residues coordinate Mn(2+): Gly-102, Asp-235, and Asp-305.

The protein belongs to the PP2C family. It depends on Mg(2+) as a cofactor.

It carries out the reaction O-phospho-L-seryl-[protein] + H2O = L-seryl-[protein] + phosphate. The catalysed reaction is O-phospho-L-threonyl-[protein] + H2O = L-threonyl-[protein] + phosphate. The protein is Putative protein phosphatase 2C 23 of Oryza sativa subsp. japonica (Rice).